A 388-amino-acid chain; its full sequence is Succinyl-diaminopimelate desuccinylase (388 aa).

A Zn(2+)-binding site is contributed by H84. D86 is a catalytic residue. D115 contributes to the Zn(2+) binding site. E146 serves as the catalytic Proton acceptor. Residues E147, E175, and H360 each contribute to the Zn(2+) site.

It belongs to the peptidase M20A family. DapE subfamily. In terms of assembly, homodimer. Requires Zn(2+) as cofactor. Co(2+) is required as a cofactor.

The catalysed reaction is N-succinyl-(2S,6S)-2,6-diaminopimelate + H2O = (2S,6S)-2,6-diaminopimelate + succinate. It functions in the pathway amino-acid biosynthesis; L-lysine biosynthesis via DAP pathway; LL-2,6-diaminopimelate from (S)-tetrahydrodipicolinate (succinylase route): step 3/3. Functionally, catalyzes the hydrolysis of N-succinyl-L,L-diaminopimelic acid (SDAP), forming succinate and LL-2,6-diaminopimelate (DAP), an intermediate involved in the bacterial biosynthesis of lysine and meso-diaminopimelic acid, an essential component of bacterial cell walls. The chain is Succinyl-diaminopimelate desuccinylase from Helicobacter pylori (strain G27).